Consider the following 403-residue polypeptide: SH3 and cysteine-rich domain-containing protein (403 aa).

The disordered stretch occupies residues 1–51 (MIPPSGAREDSGDGLTGEATGTEQPPSPASTSSLESKLQKLKRSLSFKTKS). Positions 19 to 36 (ATGTEQPPSPASTSSLES) are enriched in polar residues. The span at 39–51 (QKLKRSLSFKTKS) shows a compositional bias: basic residues. A Phorbol-ester/DAG-type zinc finger spans residues 108–160 (LHAFQEHVFKKPTFCDVCNHMIVGTHAKHGLRCGACKMSIHHKCADGLAPQRC). The interval 212–264 (QRTKKGGSGSGSDSPPRTSTSELVDVPEEADGPGDGSDMRTRSNSVFTYPENG) is disordered. Low complexity predominate over residues 222 to 232 (GSDSPPRTSTS). SH3 domains are found at residues 286 to 345 (LQMN…RVEE) and 348 to 403 (KIYR…LVDV).

In terms of assembly, interacts (via SH3 domains) with CACNA1S. Interacts with CACNA1H. Interacts with CACNA1C. As to expression, expressed predominantly in brain Detected in brain neurons, more specifically in hippocampus, cerebellum and inferior olive. Highly expressed in urinary bladder, and detected at lower levels in adrenal gland. Detected at very low levels in heart, liver, lung and kidney.

It localises to the cytoplasm. The protein localises to the cytosol. Its subcellular location is the cell membrane. The protein resides in the sarcolemma. In terms of biological role, promotes expression of the ion channel CACNA1H at the cell membrane, and thereby contributes to the regulation of channel activity. Plays a minor and redundant role in promoting the expression of calcium channel CACNA1S at the cell membrane, and thereby contributes to increased channel activity. Slows the rate of calcium-mediated inactivation of CACNA1C calcium channel activity. The polypeptide is SH3 and cysteine-rich domain-containing protein (Mus musculus (Mouse)).